The sequence spans 490 residues: Delta(14)-sterol reductase (490 aa).

The next 7 helical transmembrane spans lie at 23 to 43 (FGGP…VHVF), 80 to 100 (VFGL…ALSL), 136 to 156 (LAIL…WTFI), 160 to 180 (FAQI…FVYV), 230 to 250 (EFME…AFIA), 255 to 275 (LYGY…FYVF), and 324 to 344 (QLGA…YSIF). NADP(+) contacts are provided by residues K351, R355, I378, W383, and 390–391 (NY). Residues 436 to 456 (ARGWGIVFTYFYILYFAILLI) form a helical membrane-spanning segment. Residues D462, 466 to 470 (CSKKY), and Y477 each bind NADP(+).

It belongs to the ERG4/ERG24 family.

The protein localises to the membrane. The catalysed reaction is 4,4-dimethyl-5alpha-cholesta-8,24-dien-3beta-ol + NADP(+) = 4,4-dimethyl-5alpha-cholesta-8,14,24-trien-3beta-ol + NADPH + H(+). The protein operates within steroid biosynthesis; zymosterol biosynthesis; zymosterol from lanosterol: step 2/6. Reduces the C14=C15 double bond of 4,4-dimethyl-cholesta-8,14,24-trienol to produce 4,4-dimethyl-cholesta-8,24-dienol. The sequence is that of Delta(14)-sterol reductase (erg-3) from Neurospora crassa (strain ATCC 24698 / 74-OR23-1A / CBS 708.71 / DSM 1257 / FGSC 987).